A 473-amino-acid chain; its full sequence is MKTDTPTFEAQQIVRLRRGRLIRRLVQRDKTPLAILLMAAVVGTLTGLVGVAFEKAVSWVQNMRIGALVQVADHAFLLWPLAFILSALLAMVGYFLVRKFAPEAGGSGIPEIEGALEELRPVRWWRVLPVKFIGGMGTLGAGMVLGREGPTVQIGGNLGRMVLDVFRMRSAEARHTLLATGAAAGLSAAFNAPLAGILFIIEEMRPQFRYNLISIKAVFTGVIMSSIVFRIFNGEAPIIEVGKLSNAPVNTLWLYLVLGIIFGCVGPVFNTLVLRTQDMFQRFHGGEIKKWVLMGGAIGGLCGILGLIEPEAAGGGFNLIPIAAAGNFSVGLLLFIFITRVVTTLLCFSSGAPGGIFAPMLALGTLLGTAFGMAAAVLFPQYHLEAGTFAIAGMGALMAASVRAPLTGIVLVLEMTDNYQLILPMIITCLGATLLAQFLGGKPLYSTILARTLAKQDAEQAAKNQSTPAGENT.

The Cytoplasmic portion of the chain corresponds to 1-32; the sequence is MKTDTPTFEAQQIVRLRRGRLIRRLVQRDKTP. Residues 33-69 traverse the membrane as a helical segment; that stretch reads LAILLMAAVVGTLTGLVGVAFEKAVSWVQNMRIGALV. Over 70 to 76 the chain is Periplasmic; the sequence is QVADHAF. Residues 77–100 form a helical membrane-spanning segment; sequence LLWPLAFILSALLAMVGYFLVRKF. The Selectivity filter part_1 signature appears at 106–110; that stretch reads GSGIP. Ser107 is a chloride binding site. The segment at residues 109–116 is an intramembrane region (helical); it reads IPEIEGAL. Residues 117 to 123 are Cytoplasmic-facing; sequence EELRPVR. 2 consecutive transmembrane segments (helical) span residues 124–141 and 148–166; these read WWRV…TLGA and EGPT…LDVF. A Selectivity filter part_2 motif is present at residues 146-150; it reads GREGP. The Cytoplasmic portion of the chain corresponds to 167 to 176; the sequence is RMRSAEARHT. 2 consecutive intramembrane regions (helical) follow at residues 177–189 and 193–201; these read LLAT…LSAA and PLAGILFII. Residues 202–214 are Cytoplasmic-facing; sequence EEMRPQFRYNLIS. Residues 215-232 form a helical membrane-spanning segment; it reads IKAVFTGVIMSSIVFRIF. At 233–252 the chain is on the periplasmic side; it reads NGEAPIIEVGKLSNAPVNTL. Residues 253-281 form a helical membrane-spanning segment; sequence WLYLVLGIIFGCVGPVFNTLVLRTQDMFQ. The Cytoplasmic portion of the chain corresponds to 282–287; sequence RFHGGE. The chain crosses the membrane as a helical span at residues 288–309; it reads IKKWVLMGGAIGGLCGILGLIE. At 310 to 329 the chain is on the periplasmic side; the sequence is PEAAGGGFNLIPIAAAGNFS. The next 2 helical transmembrane spans lie at 330–349 and 355–376; these read VGLL…LCFS and GIFA…MAAA. The Selectivity filter part_3 motif lies at 355–359; that stretch reads GIFAP. Residues Ile356 and Phe357 each contribute to the chloride site. Topologically, residues 377 to 386 are periplasmic; the sequence is VLFPQYHLEA. The segment at residues 387 to 401 is an intramembrane region (helical); the sequence is GTFAIAGMGALMAAS. Positions 402–404 form an intramembrane region, note=Loop between two helices; it reads VRA. The helical intramembrane region spans 405–416; that stretch reads PLTGIVLVLEMT. The note=Loop between two helices intramembrane region spans 417–421; the sequence is DNYQL. Residues 422–438 form a helical membrane-spanning segment; it reads ILPMIITCLGATLLAQF. Over 439–473 the chain is Cytoplasmic; it reads LGGKPLYSTILARTLAKQDAEQAAKNQSTPAGENT. Tyr445 is a binding site for chloride.

This sequence belongs to the chloride channel (TC 2.A.49) family. ClcA subfamily. As to quaternary structure, homodimer.

It is found in the cell inner membrane. It catalyses the reaction 2 chloride(in) + H(+)(out) = 2 chloride(out) + H(+)(in). Functionally, proton-coupled chloride transporter. Functions as antiport system and exchanges two chloride ions for 1 proton. Probably acts as an electrical shunt for an outwardly-directed proton pump that is linked to amino acid decarboxylation, as part of the extreme acid resistance (XAR) response. The polypeptide is H(+)/Cl(-) exchange transporter ClcA (Salmonella arizonae (strain ATCC BAA-731 / CDC346-86 / RSK2980)).